A 228-amino-acid chain; its full sequence is MYLLIPAAGVGKRMGCDRNKLLLEVRSQPIIAWTLLAAQAASEISWIGIISQPTDWPDFKSILANLQLTKPVEFILGGSTRQESVYNGLQALPTAAEQVLIHDGARCLATPNLLNSCAQAIRHCSGLIAAVPVKDTIKVVDEDGIIQNTPDRRNLWAAQTPQGFNVELLKQCHAEGVRQGWEVTDDAALFEKCGIEVQIVEGEETNLKVTTPQDLAIAEFILNSRDNS.

Belongs to the IspD/TarI cytidylyltransferase family. IspD subfamily.

The enzyme catalyses 2-C-methyl-D-erythritol 4-phosphate + CTP + H(+) = 4-CDP-2-C-methyl-D-erythritol + diphosphate. Its pathway is isoprenoid biosynthesis; isopentenyl diphosphate biosynthesis via DXP pathway; isopentenyl diphosphate from 1-deoxy-D-xylulose 5-phosphate: step 2/6. In terms of biological role, catalyzes the formation of 4-diphosphocytidyl-2-C-methyl-D-erythritol from CTP and 2-C-methyl-D-erythritol 4-phosphate (MEP). The protein is 2-C-methyl-D-erythritol 4-phosphate cytidylyltransferase of Nostoc sp. (strain PCC 7120 / SAG 25.82 / UTEX 2576).